Reading from the N-terminus, the 429-residue chain is Adenylosuccinate synthetase (429 aa).

Residues 12–18 (GDEGKGK) and 40–42 (GHT) contribute to the GTP site. D13 serves as the catalytic Proton acceptor. Mg(2+) is bound by residues D13 and G40. IMP-binding positions include 13 to 16 (DEGK), 38 to 41 (NAGH), T129, R143, Q223, T238, and R302. The Proton donor role is filled by H41. 298-304 (VVTGRKR) lines the substrate pocket. GTP contacts are provided by residues R304, 330 to 332 (KLD), and 412 to 414 (STS).

This sequence belongs to the adenylosuccinate synthetase family. As to quaternary structure, homodimer. Requires Mg(2+) as cofactor.

Its subcellular location is the cytoplasm. The enzyme catalyses IMP + L-aspartate + GTP = N(6)-(1,2-dicarboxyethyl)-AMP + GDP + phosphate + 2 H(+). It participates in purine metabolism; AMP biosynthesis via de novo pathway; AMP from IMP: step 1/2. Its function is as follows. Plays an important role in the de novo pathway of purine nucleotide biosynthesis. Catalyzes the first committed step in the biosynthesis of AMP from IMP. The chain is Adenylosuccinate synthetase from Brucella suis (strain ATCC 23445 / NCTC 10510).